A 1097-amino-acid chain; its full sequence is MSTSQPSQQQNPEQVVNDIRQKIEKERKIIQGFNDVKRNTNNPEVIQKWKSKIIESQSMIDYYQETMNKLTRQMQRLNTNSSSRTASRSSVISEYKPSYSNFDLIKYECPSLGNKIQFMLQYLEFKLQVENKYSEANKKLSHLYLMDGDKSSSNAAEGGRAESDQRIQLLEKALKKYQKFSINDHEFDRDYEIMDSTKHSRKLLTGRLTVSITCIRDVDHIATALAKKRETVVVIKVDDLEKARTKPSKNDNWNEEMVIDVDKSHEIELAVMDKQNGIYVPVAVNWFSLFDLAEEIRKKKVAKDQGSSGWLPAANLPQTGGSGAGTGSSMTGGASYGATSPLPAHNDLRPSVSPSSDAKENKVSVSTWLSLEPGGQMLINLNFEKSITNGKQFRGPLGRHGAIRQKKEEVFEKHGHQFVQKQFYNIMSCALCGEFLRYTGYQCQDCKFLCHKKCYQKVVTKCISKSGSDYDAAQLNHRIPHRFEPITNHGTKWCCHCGYILPWGKKNVRKCTECGVMCHAQCTHLVPDFCGMSLQMANEILATIESTKVSPKKAQHQQSHAKPLPPKPPIESKPSMDSEETLHNEPSYKSLRPASVVHQDTNFVSKLPTTVQNKYQEPVELPPQQQNQVVPSTRRRGHGSTDLSFETGYGQQQHQHHRDVPQIVVEDHQHYNSNDNRDVEMEESKDEFDNFDYNNKYTENEILTDVQQDQVRSPFADQIQGVPETSHAKQQNQQVQQVQQQEELGHQRTHSSGKSGKSKRRKRKVGLDDFQFLAVLGKGNFGKVMLAESRHTSKLCAIKVLKKDFIVENDEAESVKSEKRVFLTANKEMHPFLLNLHCCFQTENRIYFVMEYISGGDLMWHIQKNRFTAKRAKFYACEVLLGLKYFHDNGIVYRDLKLDNILLTTKGHIKIGDYGLCKEDMWHKSTTSTFCGTPEFMAPEIVAGKAYDRSVDWWAFGVLLFQMLLCQSPFKGDDEDDIFNAIENDEVKYPINLSRQTVLVLQALLTKDPSQRLGSGPKDAEEIMEHPYFHDVNFDDVLNCRIPAPYIPEVQSEHDYSNFDKEFTSETPRLTPVETVLTSEMQEQFRGFSHISDNATI.

REM-1 domains are found at residues 2–76 and 106–183; these read STSQ…QMQR and KYEC…FSIN. One can recognise a C2 domain in the interval 189-311; the sequence is RDYEIMDSTK…AKDQGSSGWL (123 aa). The tract at residues 304-359 is disordered; that stretch reads DQGSSGWLPAANLPQTGGSGAGTGSSMTGGASYGATSPLPAHNDLRPSVSPSSDAK. Positions 327 to 340 are enriched in low complexity; it reads GSSMTGGASYGATS. 2 consecutive Phorbol-ester/DAG-type zinc fingers follow at residues 415–462 and 480–530; these read GHQF…VTKC and PHRF…PDFC. Disordered regions lie at residues 548 to 594, 615 to 646, and 724 to 763; these read KVSP…LRPA, YQEP…LSFE, and ETSH…RRKR. Positions 574–583 are enriched in basic and acidic residues; the sequence is PSMDSEETLH. Positions 730 to 741 are enriched in low complexity; the sequence is QQNQQVQQVQQQ. The span at 747–763 shows a compositional bias: basic residues; that stretch reads QRTHSSGKSGKSKRRKR. One can recognise a Protein kinase domain in the interval 770–1029; sequence FQFLAVLGKG…AEEIMEHPYF (260 aa). ATP-binding positions include 776 to 784 and Lys799; that span reads LGKGNFGKV. The Proton acceptor role is filled by Asp895. Positions 1030–1097 constitute an AGC-kinase C-terminal domain; it reads HDVNFDDVLN…FSHISDNATI (68 aa).

The protein belongs to the protein kinase superfamily. AGC Ser/Thr protein kinase family. PKC subfamily.

The catalysed reaction is L-seryl-[protein] + ATP = O-phospho-L-seryl-[protein] + ADP + H(+). It carries out the reaction L-threonyl-[protein] + ATP = O-phospho-L-threonyl-[protein] + ADP + H(+). Functionally, necessary for osmotic stability. The polypeptide is Protein kinase C-like 1 (PKC1) (Candida albicans (Yeast)).